Consider the following 179-residue polypeptide: Large ribosomal subunit protein uL5 (179 aa).

The protein belongs to the universal ribosomal protein uL5 family. In terms of assembly, part of the 50S ribosomal subunit; part of the 5S rRNA/L5/L18/L25 subcomplex. Contacts the 5S rRNA and the P site tRNA. Forms a bridge to the 30S subunit in the 70S ribosome.

In terms of biological role, this is one of the proteins that bind and probably mediate the attachment of the 5S RNA into the large ribosomal subunit, where it forms part of the central protuberance. In the 70S ribosome it contacts protein S13 of the 30S subunit (bridge B1b), connecting the 2 subunits; this bridge is implicated in subunit movement. Contacts the P site tRNA; the 5S rRNA and some of its associated proteins might help stabilize positioning of ribosome-bound tRNAs. The sequence is that of Large ribosomal subunit protein uL5 from Bacillus cereus (strain Q1).